A 142-amino-acid chain; its full sequence is Nucleoside diphosphate kinase (142 aa).

ATP contacts are provided by Lys-11, Phe-59, Arg-87, Thr-93, Arg-104, and Asn-114. His-117 functions as the Pros-phosphohistidine intermediate in the catalytic mechanism.

The protein belongs to the NDK family. As to quaternary structure, homotetramer. Requires Mg(2+) as cofactor.

Its subcellular location is the cytoplasm. It catalyses the reaction a 2'-deoxyribonucleoside 5'-diphosphate + ATP = a 2'-deoxyribonucleoside 5'-triphosphate + ADP. The catalysed reaction is a ribonucleoside 5'-diphosphate + ATP = a ribonucleoside 5'-triphosphate + ADP. Its function is as follows. Major role in the synthesis of nucleoside triphosphates other than ATP. The ATP gamma phosphate is transferred to the NDP beta phosphate via a ping-pong mechanism, using a phosphorylated active-site intermediate. This chain is Nucleoside diphosphate kinase, found in Thiobacillus denitrificans (strain ATCC 25259 / T1).